Reading from the N-terminus, the 169-residue chain is MILGLALIPSKSFQEAVDSYRKRYDKQYSRIKPHVTIKAPFEIKDGDLDSVIEQVRARINGIPAVEVHATKASSFKPTNNVIYFKVAKTDDLEELFNRFNGEDFYGEAEHVFVPHFTIAQGLSSQEFEDIFGQVALAGVDHKEIIDELTLLRFDDDEDKWKVIETFKLA.

Catalysis depends on His34, which acts as the Proton donor. Short sequence motifs (HXTX) lie at residues His34–Ile37 and His115–Ile118. The active-site Proton acceptor is His115.

This sequence belongs to the 2H phosphoesterase superfamily. YjcG family.

This chain is Putative phosphoesterase SACOL1020, found in Staphylococcus aureus (strain COL).